Consider the following 560-residue polypeptide: MVLLKEPVQPLPRSSLLYNNASNSSSRIKETRKVKLLYNPLTKRQILNNFEILATLGNGQYGKVKLARDLGTGALVAIKILNRFEKRSGYSLQLKVENPRVNQEIEVMKRCHHENVVELYEILNDPESTKVYLVLEYCSRGPVKWCPENKMEIKAVGPSILTFQQSRKVVLDVVSGLEYLHSQGITHRDIKPSNLLISSNGTVKISDFGVAMSTATGSTNIQSSHEQLLKSRALGTPAFFAPELCSTEKEYSCSSAIDIWSLGVTIYCLLFGKLPFNANSGLELFDSIINKPLEFPSYEEMLNGATSGITMEEYTDAKDLLKKLLQKDPDKRIKLADIKVHPFMCHYGKSDAASVSTNLETFHELKVSPPSSCKRVELVSLPVNSSFASLDSVYMENFDHNNLRTGADRNSTYSPSIYDANTLSPSAYHNIGSRESSYSSFSSFTSSTAFASQISIQDAPAIGDQQCLIGESGSSLRVNSCEFPQYTTMSPVGEYPFESTEASLSSTLTPVGNVPQRIKAHLVEGKSNSKDDLRIEADASLVFEASDAQRTRRRMSLYKL.

The 295-residue stretch at 50-344 (FEILATLGNG…LADIKVHPFM (295 aa)) folds into the Protein kinase domain. Residues 56 to 64 (LGNGQYGKV) and Lys79 contribute to the ATP site. Asp189 acts as the Proton acceptor in catalysis.

It belongs to the protein kinase superfamily. Ser/Thr protein kinase family. In terms of processing, autophosphorylated.

It carries out the reaction L-seryl-[protein] + ATP = O-phospho-L-seryl-[protein] + ADP + H(+). The catalysed reaction is L-threonyl-[protein] + ATP = O-phospho-L-threonyl-[protein] + ADP + H(+). One of the three SNF1 protein kinases (with SAK1 and ELM1) which are required for growth on nonfermentable carbon sources and nonpreferred sugars and for response to environmental stress. Activates SNF1 by phosphorylation of its activation-loop 'Thr-210'. Required for the regulation by SNF1 of the transcription of a large set of genes, the modification the activity of metabolic enzymes, and the control of various nutrient-responsive cellular developmental processes. Also phosphorylates GAL83, MIG1 and SIP2. In Saccharomyces cerevisiae (strain YJM789) (Baker's yeast), this protein is Serine/threonine-protein kinase TOS3 (TOS3).